Reading from the N-terminus, the 269-residue chain is NAD kinase (269 aa).

The active-site Proton acceptor is the D45. Residues 45 to 46 (DG), 122 to 123 (NE), R149, D151, and A186 each bind NAD(+).

This sequence belongs to the NAD kinase family. The cofactor is a divalent metal cation.

The protein localises to the cytoplasm. It carries out the reaction NAD(+) + ATP = ADP + NADP(+) + H(+). Functionally, involved in the regulation of the intracellular balance of NAD and NADP, and is a key enzyme in the biosynthesis of NADP. Catalyzes specifically the phosphorylation on 2'-hydroxyl of the adenosine moiety of NAD to yield NADP. In Staphylococcus haemolyticus (strain JCSC1435), this protein is NAD kinase.